We begin with the raw amino-acid sequence, 419 residues long: UDP-N-acetylglucosamine 1-carboxyvinyltransferase (419 aa).

22-23 (KN) contacts phosphoenolpyruvate. UDP-N-acetyl-alpha-D-glucosamine is bound at residue R92. Residue C116 is the Proton donor of the active site. A 2-(S-cysteinyl)pyruvic acid O-phosphothioketal modification is found at C116. Residues 121 to 125 (RPIDL), D306, and I328 contribute to the UDP-N-acetyl-alpha-D-glucosamine site.

This sequence belongs to the EPSP synthase family. MurA subfamily.

It is found in the cytoplasm. The catalysed reaction is phosphoenolpyruvate + UDP-N-acetyl-alpha-D-glucosamine = UDP-N-acetyl-3-O-(1-carboxyvinyl)-alpha-D-glucosamine + phosphate. It participates in cell wall biogenesis; peptidoglycan biosynthesis. Functionally, cell wall formation. Adds enolpyruvyl to UDP-N-acetylglucosamine. Target for the antibiotic fosfomycin. The sequence is that of UDP-N-acetylglucosamine 1-carboxyvinyltransferase from Streptococcus pneumoniae (strain Hungary19A-6).